We begin with the raw amino-acid sequence, 484 residues long: Glutamyl-tRNA(Gln) amidotransferase subunit A (484 aa).

Catalysis depends on charge relay system residues Lys-74 and Ser-149. Ser-173 (acyl-ester intermediate) is an active-site residue.

Belongs to the amidase family. GatA subfamily. As to quaternary structure, heterotrimer of A, B and C subunits.

The catalysed reaction is L-glutamyl-tRNA(Gln) + L-glutamine + ATP + H2O = L-glutaminyl-tRNA(Gln) + L-glutamate + ADP + phosphate + H(+). Functionally, allows the formation of correctly charged Gln-tRNA(Gln) through the transamidation of misacylated Glu-tRNA(Gln) in organisms which lack glutaminyl-tRNA synthetase. The reaction takes place in the presence of glutamine and ATP through an activated gamma-phospho-Glu-tRNA(Gln). This is Glutamyl-tRNA(Gln) amidotransferase subunit A from Prochlorococcus marinus subsp. pastoris (strain CCMP1986 / NIES-2087 / MED4).